A 69-amino-acid chain; its full sequence is U2-agatoxin-Ao1i (69 aa).

A signal peptide spans 1–20; it reads MKAIISLLLISAMVFSMIEA. The propeptide occupies 21–34; sequence VPVXXGLQLFESER. Cystine bridges form between C36–C52, C43–C57, and C51–C67. L68 bears the Leucine amide mark.

This sequence belongs to the neurotoxin 01 (U2-agtx) family. Expressed by the venom gland.

It localises to the secreted. Functionally, insect active toxin causing rapid but reversible paralysis in crickets. No activity shown in mammals. Does not show effect on mammalian voltage-gated calcium channels. The polypeptide is U2-agatoxin-Ao1i (Agelena orientalis (Funnel-web spider)).